A 346-amino-acid chain; its full sequence is Protein RecA (346 aa).

Residue 67-74 (GPESSGKT) participates in ATP binding.

This sequence belongs to the RecA family.

The protein resides in the cytoplasm. Functionally, can catalyze the hydrolysis of ATP in the presence of single-stranded DNA, the ATP-dependent uptake of single-stranded DNA by duplex DNA, and the ATP-dependent hybridization of homologous single-stranded DNAs. It interacts with LexA causing its activation and leading to its autocatalytic cleavage. In Mycobacterium ulcerans (strain Agy99), this protein is Protein RecA.